A 148-amino-acid chain; its full sequence is Endoribonuclease YbeY (148 aa).

Positions 102, 106, and 112 each coordinate Zn(2+).

It belongs to the endoribonuclease YbeY family. Zn(2+) serves as cofactor.

It is found in the cytoplasm. Its function is as follows. Single strand-specific metallo-endoribonuclease involved in late-stage 70S ribosome quality control and in maturation of the 3' terminus of the 16S rRNA. The protein is Endoribonuclease YbeY of Phytoplasma mali (strain AT).